Consider the following 1166-residue polypeptide: DNA-directed RNA polymerase I subunit RPA2 (1166 aa).

The C4-type zinc-finger motif lies at cysteine 1081–cysteine 1130.

This sequence belongs to the RNA polymerase beta chain family. As to quaternary structure, component of the RNA polymerase I (Pol I) complex consisting of at least 13 subunits.

Its subcellular location is the nucleus. It is found in the nucleolus. The enzyme catalyses RNA(n) + a ribonucleoside 5'-triphosphate = RNA(n+1) + diphosphate. In terms of biological role, DNA-dependent RNA polymerase catalyzes the transcription of DNA into RNA using the four ribonucleoside triphosphates as substrates. Second largest core component of RNA polymerase I which synthesizes ribosomal RNA precursors. Proposed to contribute to the polymerase catalytic activity and forms the polymerase active center together with the largest subunit. Pol I is composed of mobile elements and RPA2 is part of the core element with the central large cleft and probably a clamp element that moves to open and close the cleft. The polypeptide is DNA-directed RNA polymerase I subunit RPA2 (RPA2) (Euplotoides octocarinatus (Freshwater ciliate)).